The chain runs to 290 residues: 4-hydroxy-3-methylbut-2-enyl diphosphate reductase (290 aa).

C13 is a binding site for [4Fe-4S] cluster. Positions 41 and 75 each coordinate (2E)-4-hydroxy-3-methylbut-2-enyl diphosphate. Residues H41 and H75 each contribute to the dimethylallyl diphosphate site. Positions 41 and 75 each coordinate isopentenyl diphosphate. C97 provides a ligand contact to [4Fe-4S] cluster. Residue H129 coordinates (2E)-4-hydroxy-3-methylbut-2-enyl diphosphate. H129 lines the dimethylallyl diphosphate pocket. H129 is an isopentenyl diphosphate binding site. Residue E131 is the Proton donor of the active site. T167 serves as a coordination point for (2E)-4-hydroxy-3-methylbut-2-enyl diphosphate. Residue C198 participates in [4Fe-4S] cluster binding. 4 residues coordinate (2E)-4-hydroxy-3-methylbut-2-enyl diphosphate: S226, S227, N228, and S270. Dimethylallyl diphosphate contacts are provided by S226, S227, N228, and S270. Isopentenyl diphosphate-binding residues include S226, S227, N228, and S270.

The protein belongs to the IspH family. [4Fe-4S] cluster is required as a cofactor.

The enzyme catalyses isopentenyl diphosphate + 2 oxidized [2Fe-2S]-[ferredoxin] + H2O = (2E)-4-hydroxy-3-methylbut-2-enyl diphosphate + 2 reduced [2Fe-2S]-[ferredoxin] + 2 H(+). It carries out the reaction dimethylallyl diphosphate + 2 oxidized [2Fe-2S]-[ferredoxin] + H2O = (2E)-4-hydroxy-3-methylbut-2-enyl diphosphate + 2 reduced [2Fe-2S]-[ferredoxin] + 2 H(+). The protein operates within isoprenoid biosynthesis; dimethylallyl diphosphate biosynthesis; dimethylallyl diphosphate from (2E)-4-hydroxy-3-methylbutenyl diphosphate: step 1/1. Its pathway is isoprenoid biosynthesis; isopentenyl diphosphate biosynthesis via DXP pathway; isopentenyl diphosphate from 1-deoxy-D-xylulose 5-phosphate: step 6/6. In terms of biological role, catalyzes the conversion of 1-hydroxy-2-methyl-2-(E)-butenyl 4-diphosphate (HMBPP) into a mixture of isopentenyl diphosphate (IPP) and dimethylallyl diphosphate (DMAPP). Acts in the terminal step of the DOXP/MEP pathway for isoprenoid precursor biosynthesis. In Bacteroides fragilis (strain ATCC 25285 / DSM 2151 / CCUG 4856 / JCM 11019 / LMG 10263 / NCTC 9343 / Onslow / VPI 2553 / EN-2), this protein is 4-hydroxy-3-methylbut-2-enyl diphosphate reductase.